A 216-amino-acid chain; its full sequence is UDP-N-acetylbacillosamine N-acetyltransferase (216 aa).

The active-site Proton acceptor is the His-137. Acetyl-CoA is bound at residue His-146.

This sequence belongs to the transferase hexapeptide repeat family. As to quaternary structure, forms oligomers.

The enzyme catalyses UDP-N-acetylbacillosamine + acetyl-CoA = UDP-N,N'-diacetylbacillosamine + CoA + H(+). Its function is as follows. Catalyzes the conversion of UDP-2,4,6-trideoxy-2-acetamido-4-amino glucose to UDP-2,4,6-trideoxy-2,4-diacetamido glucose, commonly known as UDP-N,N'-diacetylbacillosamine (UDP-diNAcBac). The protein is UDP-N-acetylbacillosamine N-acetyltransferase of Bacillus subtilis (strain 168).